A 207-amino-acid chain; its full sequence is Strobilurin A biosynthesis cluster protein r1 (207 aa).

The next 2 membrane-spanning stretches (helical) occupy residues 108 to 128 and 169 to 189; these read FIFPSLALKTTIWSVAGLLYL and NLTTGVSYVLGTLVFGFPFWI.

Its subcellular location is the membrane. It functions in the pathway mycotoxin biosynthesis. Its function is as follows. Part of the gene cluster that mediates the biosynthesis of strobilurin A, an antifungal polyketide that contains a key beta-methoxyacrylate toxophore that targets the complex III of the mitochondrial electron transport chain. Strobilurin biosynthesis begins with construction of benzoyl CoA by step-wise elimination of ammonia from phenylalanine by the phenylalanine ammonia-lyase str11, oxygenation by str8 and retro-Claisen reaction to form benzoic acid, which is activated to its CoA thiolester benzoyl CoA by the dedicated CoA ligase str10. Benzoyl CoA forms the starter unit for the highly reducing polyketide synthase stpks1 that produces the polyketide prestrobilutin A. The FAD-dependent oxygenase str9 then catalyzes the key oxidative rearrangement responsible for the creation of the beta-methoxyacrylate toxophore. Str9 performs epoxidation of the 2,3 olefin of prestrobilutin A, followed by Meinwald rearrangement to furnish the aldehyde intermediate. Rapid enolization of the aldehyde intermediate would give the beta-methoxyacrylate skeleton and methylations catalyzed by str2 and str3 complete the synthesis and lead to the production of strobilurin A. The short-chain dehydrogenase stl2 and the dehydrogenase str4 play a role in the shunt pathway leading to the production of bolineol. The cluster encodes no obvious halogenase gene that could be involved in production of strobilurin B, nor any obvious dimethylallyl-transferase that could be involved in the production of strobilurin G. It is possible that unknown proteins encoded in, or near, the cluster (such as str1 or stl1) may form new classes of halogenases or dimethylally-transferases, or that the responsible genes are located elsewhere on the genome. Similarly, proteins encoded by str5/str6 hydrolases appear to have no chemical role in the biosynthesis of strobilurin A. Finally, no obvious self-resistance gene is found within the cluster. In Strobilurus tenacellus, this protein is Strobilurin A biosynthesis cluster protein r1.